We begin with the raw amino-acid sequence, 339 residues long: 1-aminocyclopropane-1-carboxylate deaminase (339 aa).

At Lys-52 the chain carries N6-(pyridoxal phosphate)lysine. Catalysis depends on Ser-79, which acts as the Nucleophile.

Belongs to the ACC deaminase/D-cysteine desulfhydrase family. Homotrimer. It depends on pyridoxal 5'-phosphate as a cofactor.

It carries out the reaction 1-aminocyclopropane-1-carboxylate + H2O = 2-oxobutanoate + NH4(+). In terms of biological role, catalyzes a cyclopropane ring-opening reaction, the irreversible conversion of 1-aminocyclopropane-1-carboxylate (ACC) to ammonia and alpha-ketobutyrate. Allows growth on ACC as a nitrogen source. This is 1-aminocyclopropane-1-carboxylate deaminase from Bradyrhizobium sp. (strain ORS 278).